The sequence spans 149 residues: UPF0306 protein PM1958 (149 aa).

This sequence belongs to the UPF0306 family.

This is UPF0306 protein PM1958 from Pasteurella multocida (strain Pm70).